A 789-amino-acid chain; its full sequence is SH3 domain-containing protein 19 (789 aa).

3 disordered regions span residues 24–170 (TNTE…PPRL), 209–404 (DDDV…RPKP), and 472–497 (TPLD…SGAP). Serine 65 is subject to Phosphoserine. The segment covering 296–305 (SHSDRTRNPE) has biased composition (basic and acidic residues). A compositionally biased stretch (pro residues) spans 335–351 (WRPPPKGAPERPPPPKL). Residues 352–361 (PASKSSNKNL) are compositionally biased toward low complexity. A Phosphoserine modification is found at serine 368. 5 SH3 domains span residues 414–476 (LSVP…PLDE), 494–553 (SGAP…VIVD), 570–629 (AKGP…LVGD), 660–719 (PPGE…PCPA), and 729–788 (PKGR…FLQV). The segment covering 474–484 (LDERPRGRPND) has biased composition (basic and acidic residues). The segment at 635–663 (ANILSTKVPPKTKNEDPGSNSQDSSPPGE) is disordered.

Interacts with ADAM12. Isoform 2 (but not isoform 1) interacts with ADAM9, ADAM10, ADAM15 and ADAM17. Interacts with SH3GL1 SH3 domain. Interacts via SH3 3 and SH3 4 or SH3 4 and SH3 5 domains with SOS2. Probably forms a trimeric complex with SH3GL1 and SOS2. Interacts with SH3YL1. As to expression, expressed in hair follicles.

It is found in the cytoplasm. Its function is as follows. May play a role in regulating A disintegrin and metalloproteases (ADAMs) in the signaling of EGFR-ligand shedding. May be involved in suppression of Ras-induced cellular transformation and Ras-mediated activation of ELK1. Plays a role in the regulation of cell morphology and cytoskeletal organization. This chain is SH3 domain-containing protein 19 (Sh3d19), found in Mus musculus (Mouse).